Reading from the N-terminus, the 32-residue chain is Cytochrome b6-f complex subunit 8 (32 aa).

The helical transmembrane segment at 6–26 (IVGITWAALMVVFTFSLSLVV) threads the bilayer.

The protein belongs to the PetN family. In terms of assembly, the 4 large subunits of the cytochrome b6-f complex are cytochrome b6, subunit IV (17 kDa polypeptide, PetD), cytochrome f and the Rieske protein, while the 4 small subunits are PetG, PetL, PetM and PetN. The complex functions as a dimer.

It is found in the plastid. Its subcellular location is the chloroplast thylakoid membrane. Component of the cytochrome b6-f complex, which mediates electron transfer between photosystem II (PSII) and photosystem I (PSI), cyclic electron flow around PSI, and state transitions. The polypeptide is Cytochrome b6-f complex subunit 8 (Pinus koraiensis (Korean pine)).